A 428-amino-acid polypeptide reads, in one-letter code: Serine hydroxymethyltransferase (428 aa).

120 to 122 serves as a coordination point for (6S)-5,6,7,8-tetrahydrofolate; the sequence is GHI. N6-(pyridoxal phosphate)lysine is present on lysine 226.

It belongs to the SHMT family. In terms of assembly, homodimer. Pyridoxal 5'-phosphate serves as cofactor.

The protein localises to the cytoplasm. The catalysed reaction is 5,10-methylenetetrahydromethanopterin + glycine + H2O = 5,6,7,8-tetrahydromethanopterin + L-serine. Its pathway is amino-acid biosynthesis; glycine biosynthesis; glycine from L-serine: step 1/1. Functionally, catalyzes the reversible interconversion of serine and glycine with tetrahydromethanopterin (H4MPT) serving as the one-carbon carrier. Also exhibits a pteridine-independent aldolase activity toward beta-hydroxyamino acids, producing glycine and aldehydes, via a retro-aldol mechanism. This chain is Serine hydroxymethyltransferase, found in Methanopyrus kandleri (strain AV19 / DSM 6324 / JCM 9639 / NBRC 100938).